Here is a 448-residue protein sequence, read N- to C-terminus: Adenylosuccinate synthetase (448 aa).

GTP is bound by residues 36-42 (GDEGKGK) and 64-66 (GHT). Catalysis depends on D37, which acts as the Proton acceptor. Residues D37 and G64 each contribute to the Mg(2+) site. Residues 37-40 (DEGK), 62-65 (NAGH), T154, R168, N246, T261, and R325 contribute to the IMP site. H65 (proton donor) is an active-site residue. 321–327 (VTTKRKR) is a substrate binding site. GTP contacts are provided by residues R327, 353–355 (KLD), and 436–438 (GVG).

It belongs to the adenylosuccinate synthetase family. Homodimer. Mg(2+) serves as cofactor.

It is found in the cytoplasm. The catalysed reaction is IMP + L-aspartate + GTP = N(6)-(1,2-dicarboxyethyl)-AMP + GDP + phosphate + 2 H(+). The protein operates within purine metabolism; AMP biosynthesis via de novo pathway; AMP from IMP: step 1/2. Functionally, plays an important role in the de novo pathway and in the salvage pathway of purine nucleotide biosynthesis. Catalyzes the first committed step in the biosynthesis of AMP from IMP. In Drosophila mojavensis (Fruit fly), this protein is Adenylosuccinate synthetase.